A 249-amino-acid chain; its full sequence is MAGHSQFKNIMHRKGRQDAVRSKMFSKLAREITVAAKSGTPDPSMNPRLRLAIQNAKAVSMPKDNIQRAINKASMGDAENYEAVRYEGYGPGGVAVIVEALTDNRNRSASNVRAAFTKAGGAMGETGSVSFMWDRVGEIYYPASAGSADKVMEAAIEAGADDVESDEEGHTIYCAFENLGEVSKALEAALGEAESVKLIWRPQNNVPVDEERAQSLMKLVATLEDDDDVQSVYANFEVDDETLAKLSAA.

It belongs to the TACO1 family.

It localises to the cytoplasm. The sequence is that of Probable transcriptional regulatory protein mll3945 from Mesorhizobium japonicum (strain LMG 29417 / CECT 9101 / MAFF 303099) (Mesorhizobium loti (strain MAFF 303099)).